The sequence spans 437 residues: Septin-7 (437 aa).

Serine 2 carries the N-acetylserine modification. A Phosphotyrosine modification is found at tyrosine 30. In terms of domain architecture, Septin-type G spans 47–316 (RGFEFTLMVV…ENYRSRKLAA (270 aa)). Positions 47–317 (RGFEFTLMVV…NYRSRKLAAV (271 aa)) are interaction with SEPTIN12. Residues 57 to 64 (GESGLGKS) are G1 motif. Residue 57 to 64 (GESGLGKS) participates in GTP binding. At serine 77 the chain carries Phosphoserine. GTP contacts are provided by residues threonine 90, glycine 116, and 195 to 203 (KADTLTPEE). Residues 113–116 (DTPG) are G3 motif. Residues 194-197 (AKAD) form a G4 motif region. The residue at position 228 (threonine 228) is a Phosphothreonine. The GTP site is built by glycine 250 and arginine 265. The stretch at 332-433 (TKSPLAQMEE…SRTLEKNKKK (102 aa)) forms a coiled coil. Serine 334 is subject to Phosphoserine. Lysine 373 bears the N6-acetyllysine mark. Residues 378–410 (ELQRRHEQMKKNLEAQHKELEEKRRQFEDEKAN) show a composition bias toward basic and acidic residues. The disordered stretch occupies residues 378-437 (ELQRRHEQMKKNLEAQHKELEEKRRQFEDEKANWEAQQRILEQQNSSRTLEKNKKKGKIF). Residue serine 424 is modified to Phosphoserine. A Phosphothreonine modification is found at threonine 426.

It belongs to the TRAFAC class TrmE-Era-EngA-EngB-Septin-like GTPase superfamily. Septin GTPase family. In terms of assembly, septins polymerize into heterooligomeric protein complexes that form filaments, and associate with cellular membranes, actin filaments and microtubules. GTPase activity is required for filament formation. Filaments are assembled from asymmetrical heterotrimers, composed of SEPTIN2, SEPTIN6 and SEPTIN7 that associate head-to-head to form a hexameric unit. Within the trimer, directly interacts with SEPTIN6, while interaction with SEPTIN2 seems indirect. In the absence of SEPTIN6, forms homodimers. Interacts directly with CENPE and links CENPE to septin filaments composed of SEPTIN2, SEPTIN6 and SEPTIN7. Interacts with SEPTIN5, SEPTIN8, SEPTIN9 and SEPTIN11. Component of a septin core octameric complex consisting of SEPTIN12, SEPTIN7, SEPTIN6 and SEPTIN2 or SEPTIN4 in the order 12-7-6-2-2-6-7-12 or 12-7-6-4-4-6-7-12 and located in the sperm annulus; the SEPTIN12:SEPTIN7 association is mediated by the respective GTP-binding domains.

It localises to the cytoplasm. Its subcellular location is the chromosome. It is found in the centromere. The protein localises to the kinetochore. The protein resides in the cytoskeleton. It localises to the spindle. Its subcellular location is the cleavage furrow. It is found in the midbody. The protein localises to the cilium axoneme. The protein resides in the cell projection. It localises to the cilium. Its subcellular location is the flagellum. Functionally, filament-forming cytoskeletal GTPase. Required for normal organization of the actin cytoskeleton. Required for normal progress through mitosis. Involved in cytokinesis. Required for normal association of CENPE with the kinetochore. Plays a role in ciliogenesis and collective cell movements. Forms a filamentous structure with SEPTIN12, SEPTIN6, SEPTIN2 and probably SEPTIN4 at the sperm annulus which is required for the structural integrity and motility of the sperm tail during postmeiotic differentiation. This Bos taurus (Bovine) protein is Septin-7.